We begin with the raw amino-acid sequence, 429 residues long: Endoglucanase A (429 aa).

Residues 1 to 34 (MVSKKQKFLTVILVIVLAIVIVGGVFGISFVKGR) form the signal peptide. Residues 46 to 94 (AKTEQVKEPAKEEPKLVIKEKKQDESAKKEQELKKAKEEAEAAVEKETE) are compositionally biased toward basic and acidic residues. Residues 46-100 (AKTEQVKEPAKEEPKLVIKEKKQDESAKKEQELKKAKEEAEAAVEKETEKTEEEP) form a disordered region. Glutamate 249 acts as the Proton donor in catalysis. The active-site Nucleophile is the glutamate 334.

This sequence belongs to the glycosyl hydrolase 5 (cellulase A) family.

It carries out the reaction Endohydrolysis of (1-&gt;4)-beta-D-glucosidic linkages in cellulose, lichenin and cereal beta-D-glucans.. The polypeptide is Endoglucanase A (celA) (Butyrivibrio fibrisolvens).